Consider the following 122-residue polypeptide: Large ribosomal subunit protein bL17 (122 aa).

The protein belongs to the bacterial ribosomal protein bL17 family. As to quaternary structure, part of the 50S ribosomal subunit. Contacts protein L32.

In Staphylococcus aureus (strain Mu3 / ATCC 700698), this protein is Large ribosomal subunit protein bL17.